The following is a 401-amino-acid chain: Voltage-gated potassium channel subunit beta-1 (401 aa).

The NADP(+) site is built by Thr90, Trp91, Gln97, and Asp119. Tyr124 (proton donor/acceptor) is an active-site residue. The NADP(+) site is built by Asn192, Ser222, Arg223, Gln248, Trp277, Ser278, Pro279, Leu280, Ala281, Cys282, Lys288, Arg298, Gly357, Ser359, Gln363, Glu366, and Asn367.

This sequence belongs to the shaker potassium channel beta subunit family. Homotetramer. Interaction with tetrameric potassium channel alpha subunits gives rise to a heterooctamer. Identified in potassium channel complexes containing KCNA1, KCNA2, KCNA4, KCNA5, KCNA6, KCNAB1 and KCNAB2. Part of a complex containing KCNA1, KCNA4 and LGI1; interaction with LGI1 inhibits down-regulation of KCNA1 channel activity. Interacts with the dimer formed by GNB1 and GNG2; this enhances KCNA1 binding. Interacts with SQSTM. Detected in brain, in hippocampus and striatum (at protein level). Predominantly expressed in brain. No expression found in heart, skeletal muscle or kidney. In the late embryonic and early neonatal brain, highly expressed in hippocampus, cerebral cortex, caudate putamen, colliculus and cerebellum.

Its subcellular location is the cytoplasm. It localises to the membrane. The protein localises to the cell membrane. It catalyses the reaction a primary alcohol + NADP(+) = an aldehyde + NADPH + H(+). The catalysed reaction is a secondary alcohol + NADP(+) = a ketone + NADPH + H(+). Regulatory subunit of the voltage-gated potassium (Kv) Shaker channels composed of pore-forming and potassium-conducting alpha subunits and of regulatory beta subunits. The beta-1/KCNAB1 cytoplasmic subunit mediates closure of delayed rectifier potassium channels by physically obstructing the pore via its N-terminal domain and increases the speed of channel closure for other family members. Promotes the inactivation of KCNA1, KCNA2, KCNA4, KCNA5 and KCNA6 alpha subunit-containing channels. Displays nicotinamide adenine dinucleotide phosphate (NADPH)-dependent aldoketoreductase activity by catalyzing the NADPH-dependent reduction of a variety of endogenous aldehydes and ketones. The binding of NADPH is required for efficient down-regulation of potassium channel activity. Oxidation of the bound NADPH restrains N-terminal domain from blocking the channel, thereby decreasing N-type inactivation of potassium channel activity. The protein is Voltage-gated potassium channel subunit beta-1 of Mus musculus (Mouse).